A 426-amino-acid chain; its full sequence is 4-hydroxy-3-methylbut-2-en-1-yl diphosphate synthase (flavodoxin) (426 aa).

[4Fe-4S] cluster-binding residues include cysteine 320, cysteine 323, cysteine 366, and glutamate 373.

This sequence belongs to the IspG family. [4Fe-4S] cluster serves as cofactor.

It carries out the reaction (2E)-4-hydroxy-3-methylbut-2-enyl diphosphate + oxidized [flavodoxin] + H2O + 2 H(+) = 2-C-methyl-D-erythritol 2,4-cyclic diphosphate + reduced [flavodoxin]. It participates in isoprenoid biosynthesis; isopentenyl diphosphate biosynthesis via DXP pathway; isopentenyl diphosphate from 1-deoxy-D-xylulose 5-phosphate: step 5/6. Its function is as follows. Converts 2C-methyl-D-erythritol 2,4-cyclodiphosphate (ME-2,4cPP) into 1-hydroxy-2-methyl-2-(E)-butenyl 4-diphosphate. The sequence is that of 4-hydroxy-3-methylbut-2-en-1-yl diphosphate synthase (flavodoxin) from Wolbachia sp. subsp. Drosophila simulans (strain wRi).